We begin with the raw amino-acid sequence, 119 residues long: uncharacterized protein (119 aa).

The protein resides in the mitochondrion. This is an uncharacterized protein from Arabidopsis thaliana (Mouse-ear cress).